The primary structure comprises 229 residues: NAD(P)H-hydrate epimerase (229 aa).

The 215-residue stretch at 10-224 (SREVDQIAIE…DIGIPPALLD (215 aa)) folds into the YjeF N-terminal domain. Residue 57–61 (NNGGD) coordinates (6S)-NADPHX. Positions 58 and 129 each coordinate K(+). (6S)-NADPHX-binding positions include 133-139 (GTGIRGQ) and aspartate 167. Serine 170 lines the K(+) pocket.

The protein belongs to the NnrE/AIBP family. The cofactor is K(+).

It carries out the reaction (6R)-NADHX = (6S)-NADHX. The enzyme catalyses (6R)-NADPHX = (6S)-NADPHX. Its function is as follows. Catalyzes the epimerization of the S- and R-forms of NAD(P)HX, a damaged form of NAD(P)H that is a result of enzymatic or heat-dependent hydration. This is a prerequisite for the S-specific NAD(P)H-hydrate dehydratase to allow the repair of both epimers of NAD(P)HX. This Rubinisphaera brasiliensis (strain ATCC 49424 / DSM 5305 / JCM 21570 / IAM 15109 / NBRC 103401 / IFAM 1448) (Planctomyces brasiliensis) protein is NAD(P)H-hydrate epimerase.